We begin with the raw amino-acid sequence, 87 residues long: Anaphase-promoting complex subunit 11 (87 aa).

An RING-type; atypical zinc finger spans residues 35–77 (CVDCKIPGDDCPPVWGVCNHAFHMHCILKWLNANELQQCPMCR).

This sequence belongs to the RING-box family. As to quaternary structure, the APC/C is composed of at least 13 subunits that stay tightly associated throughout the cell cycle: anapc1, anapc2, anapc3, anapc4, anapc5, anapc6, anapc7, anapc8, anapc10, anapc11, cdc20, cdc26 and cdh1.

The protein localises to the nucleus. Its pathway is protein modification; protein ubiquitination. Component of the anaphase promoting complex/cyclosome (APC/C), a cell cycle-regulated E3 ubiquitin-protein ligase complex that controls progression through mitosis and the G1 phase of the cell cycle. In Dictyostelium discoideum (Social amoeba), this protein is Anaphase-promoting complex subunit 11 (anapc11).